Consider the following 226-residue polypeptide: TPD1 protein homolog 1A (226 aa).

A signal peptide spans 1–35 (MRVSSASSTPPPPAFAAAAWAVVLLAMLRSDVALA).

Interacts with MSP1. Expressed in roots, and anthers and ovules during meiosis.

In terms of biological role, involved in cell specification during anther development. Required for the differentiation of primary parietal cells into secondary parietal cells in anthers. May serve as an extracellular ligand for the MSP1 receptor kinase to limit sporocyte number in ovules. The chain is TPD1 protein homolog 1A from Oryza sativa subsp. japonica (Rice).